The following is a 95-amino-acid chain: Putative monooxygenase YcnE (95 aa).

Residues Ile2 to Leu93 form the ABM domain. A Phosphoserine modification is found at Ser24.

This sequence belongs to the LsrG family.

In terms of biological role, putative monooxygenase that may contribute to the degradation of aromatic compounds. The protein is Putative monooxygenase YcnE (ycnE) of Bacillus subtilis (strain 168).